Reading from the N-terminus, the 116-residue chain is Ly-6/neurotoxin-like protein 1 (116 aa).

The N-terminal stretch at 1 to 20 (MTPLLTLFLVALIGLPLAQA) is a signal peptide. The 85-residue stretch at 21 to 105 (LDCHVCAYNG…FAAPATLALA (85 aa)) folds into the UPAR/Ly6 domain. 5 disulfide bridges follow: C23–C46, C26–C33, C39–C64, C68–C85, and C86–C91. The GPI-anchor amidated asparagine moiety is linked to residue N92. The propeptide at 93–116 (GAGFAAPATLALAPILLATLWGLL) is removed in mature form.

In terms of assembly, interacts with nAChRs containing alpha-4:beta-2 (CHRNA4:CHRNB2) and alpha-7 (CHRNA7) subunits. Interacts with CHRNA4 probably in the endoplasmic reticulum prior to nAChR pentameric assembly. Interacts with KCNA2/Potassium voltage-gated channel subfamily A member 2.

Its subcellular location is the cell membrane. The protein resides in the cell projection. The protein localises to the dendrite. It localises to the endoplasmic reticulum. Acts in different tissues through interaction to nicotinic acetylcholine receptors (nAChRs). The proposed role as modulator of nAChR activity seems to be dependent on the nAChR subtype and stoichiometry, and to involve an effect on nAChR trafficking and its cell surface expression, and on single channel properties of the nAChR inserted in the plasma membrane. Modulates functional properties of nicotinic acetylcholine receptors (nAChRs) to prevent excessive excitation, and hence neurodegeneration. Enhances desensitization by increasing both the rate and extent of desensitization of alpha-4:beta-2-containing nAChRs and slowing recovery from desensitization. Promotes large amplitude ACh-evoked currents through alpha-4:beta-2 nAChRs. Is involved in regulation of the nAChR pentameric assembly in the endoplasmic reticulum. Shifts stoichiometry from high sensitivity alpha-4(2):beta-2(3) to low sensitivity alpha-4(3):beta-2(2) nAChR. In vitro modulates alpha-3:beta-4-containing nAChRs. Reduces cell surface expression of (alpha-3:beta-4)(2):beta-4 and (alpha-3:beta-4)(2):alpha-5 nAChRs suggesting an interaction with nAChR alpha-3(-):(+)beta-4 subunit interfaces and an allosteric mode. Corresponding single channel effects characterized by decreased unitary conductance, altered burst proportions and enhanced desensitization/inactivation seem to depend on nAChR alpha:alpha subunit interfaces and are greater in (alpha-3:beta-2)(2):alpha-3 when compared to (alpha-3:beta-2)(2):alpha-5 nAChRs. Prevents plasticity in the primary visual cortex late in life. This chain is Ly-6/neurotoxin-like protein 1, found in Saimiri boliviensis boliviensis (Bolivian squirrel monkey).